The primary structure comprises 434 residues: GTPase Obg (434 aa).

One can recognise an Obg domain in the interval 2–160 (PTFVDQTKIE…RVLRLELKLL (159 aa)). The region spanning 161–334 (ADVGLVGFPS…LMNDTATLVE (174 aa)) is the OBG-type G domain. GTP contacts are provided by residues 167 to 174 (GFPSVGKS), 192 to 196 (FTTLT), 214 to 217 (DLPG), 284 to 287 (SQMD), and 315 to 317 (SSV). Mg(2+) contacts are provided by serine 174 and threonine 194. The region spanning 356–434 (YKAPQKNEFT…IGKFVFEFVQ (79 aa)) is the OCT domain.

It belongs to the TRAFAC class OBG-HflX-like GTPase superfamily. OBG GTPase family. Monomer. Mg(2+) is required as a cofactor.

The protein resides in the cytoplasm. Functionally, an essential GTPase which binds GTP, GDP and possibly (p)ppGpp with moderate affinity, with high nucleotide exchange rates and a fairly low GTP hydrolysis rate. Plays a role in control of the cell cycle, stress response, ribosome biogenesis and in those bacteria that undergo differentiation, in morphogenesis control. This is GTPase Obg from Lactobacillus helveticus (strain DPC 4571).